Reading from the N-terminus, the 170-residue chain is MAEASEFNFTIKRKQRTMSDRRTREDTKQKKIEEKSDIDLVDSASVYSQESSRSNYSDAYDKLKREPMVEESNDAKYRNFEFSEDEEVHRPSSKASDKSYREMKRKHDDINTSDSILEKLSELNLEIEKIKQMNQPITIDAAFNMILRNVDNLTIRQKQALINAIVNSMN.

Disordered stretches follow at residues 1 to 67 (MAEA…KREP) and 83 to 106 (SEDE…MKRK). The segment covering 17-38 (TMSDRRTREDTKQKKIEEKSDI) has biased composition (basic and acidic residues). A compositionally biased stretch (polar residues) spans 45–57 (SVYSQESSRSNYS).

This sequence belongs to the rotavirus NSP5 family. In terms of assembly, homodimer. Interacts with VP1. Interacts with VP2. Interacts with NSP2 and NSP6. Post-translationally, O-glycosylated.

The protein resides in the host cytoplasm. Functionally, plays an essential role in the viral genome replication. Participates, together with NSP2, in the formation of viral factories (viroplasms) which are large inclusions in the host cytoplasm where replication intermediates are assembled and viral RNA replication takes place. Orchestrates the recruitment of viroplasmic proteins such as capsid proteins to these factories. The sequence is that of Non-structural protein 5 from Rotavirus B (isolate RVB/Human/China/ADRV/1982) (RV-B).